A 229-amino-acid chain; its full sequence is Cytochrome c oxidase subunit 2 (229 aa).

At 1–26 (MSTWANLGLQDSASPLMEQLIFFHDH) the chain is on the mitochondrial intermembrane side. A helical membrane pass occupies residues 27-48 (ALLILVMITILVGYLMFMLFFN). The Mitochondrial matrix segment spans residues 49-62 (SYINRFLLHGQLIE). A helical transmembrane segment spans residues 63–82 (MIWTILPAIILLFIAMPSLR). At 83 to 229 (LLYLLDEINE…IKWIASKVNS (147 aa)) the chain is on the mitochondrial intermembrane side. Cu cation is bound by residues His-161, Cys-196, Glu-198, Cys-200, His-204, and Met-207. Glu-198 contacts Mg(2+).

Belongs to the cytochrome c oxidase subunit 2 family. As to quaternary structure, component of the cytochrome c oxidase (complex IV, CIV), a multisubunit enzyme composed of a catalytic core of 3 subunits and several supernumerary subunits. The complex exists as a monomer or a dimer and forms supercomplexes (SCs) in the inner mitochondrial membrane with ubiquinol-cytochrome c oxidoreductase (cytochrome b-c1 complex, complex III, CIII). Requires Cu cation as cofactor.

The protein resides in the mitochondrion inner membrane. The catalysed reaction is 4 Fe(II)-[cytochrome c] + O2 + 8 H(+)(in) = 4 Fe(III)-[cytochrome c] + 2 H2O + 4 H(+)(out). Functionally, component of the cytochrome c oxidase, the last enzyme in the mitochondrial electron transport chain which drives oxidative phosphorylation. The respiratory chain contains 3 multisubunit complexes succinate dehydrogenase (complex II, CII), ubiquinol-cytochrome c oxidoreductase (cytochrome b-c1 complex, complex III, CIII) and cytochrome c oxidase (complex IV, CIV), that cooperate to transfer electrons derived from NADH and succinate to molecular oxygen, creating an electrochemical gradient over the inner membrane that drives transmembrane transport and the ATP synthase. Cytochrome c oxidase is the component of the respiratory chain that catalyzes the reduction of oxygen to water. Electrons originating from reduced cytochrome c in the intermembrane space (IMS) are transferred via the dinuclear copper A center (CU(A)) of subunit 2 and heme A of subunit 1 to the active site in subunit 1, a binuclear center (BNC) formed by heme A3 and copper B (CU(B)). The BNC reduces molecular oxygen to 2 water molecules using 4 electrons from cytochrome c in the IMS and 4 protons from the mitochondrial matrix. This Drosophila bifasciata (Fruit fly) protein is Cytochrome c oxidase subunit 2 (mt:CoII).